The following is a 1129-amino-acid chain: Ubiquitin carboxyl-terminal hydrolase 7 (1129 aa).

The MATH domain maps to 29 to 169 (EGHLALDIER…DDVIRLRCRF (141 aa)). Residues 190–500 (IGLRNQGATC…SAYMLVYVRD (311 aa)) form the USP domain. The Nucleophile role is filled by C199. The Proton acceptor role is filled by H439.

Belongs to the peptidase C19 family.

It localises to the nucleus. The catalysed reaction is Thiol-dependent hydrolysis of ester, thioester, amide, peptide and isopeptide bonds formed by the C-terminal Gly of ubiquitin (a 76-residue protein attached to proteins as an intracellular targeting signal).. In terms of biological role, hydrolase that deubiquitinates target proteins. This chain is Ubiquitin carboxyl-terminal hydrolase 7, found in Caenorhabditis briggsae.